Reading from the N-terminus, the 197-residue chain is Protein FAM219B (197 aa).

Disordered stretches follow at residues 1 to 77 (MATE…HRDH) and 117 to 142 (DENL…YSSA). A phosphoserine mark is found at Ser-14, Ser-125, and Ser-127.

Belongs to the FAM219 family.

In Mus musculus (Mouse), this protein is Protein FAM219B (Fam219b).